Consider the following 295-residue polypeptide: 4-hydroxy-tetrahydrodipicolinate synthase (295 aa).

Thr-47 is a binding site for pyruvate. Tyr-135 functions as the Proton donor/acceptor in the catalytic mechanism. Lys-163 functions as the Schiff-base intermediate with substrate in the catalytic mechanism. Ile-206 lines the pyruvate pocket.

Belongs to the DapA family. In terms of assembly, homodimer.

Its subcellular location is the cytoplasm. It carries out the reaction L-aspartate 4-semialdehyde + pyruvate = (2S,4S)-4-hydroxy-2,3,4,5-tetrahydrodipicolinate + H2O + H(+). It functions in the pathway amino-acid biosynthesis; L-lysine biosynthesis via DAP pathway; (S)-tetrahydrodipicolinate from L-aspartate: step 3/4. In terms of biological role, catalyzes the condensation of (S)-aspartate-beta-semialdehyde [(S)-ASA] and pyruvate to 4-hydroxy-tetrahydrodipicolinate (HTPA). This chain is 4-hydroxy-tetrahydrodipicolinate synthase, found in Staphylococcus aureus (strain MSSA476).